A 318-amino-acid polypeptide reads, in one-letter code: Sol locus transcriptional repressor (318 aa).

TPR repeat units follow at residues 65–98, 99–132, 133–166, and 167–199; these read ANAY…RPKT, INDV…QPNV, GISY…GSTN, and SVYR…EPEK.

Functionally, transcriptional repressor of the sol locus (adhE/aad, ctfA, ctfB and adc) genes for butanol and acetone formation. The protein is Sol locus transcriptional repressor (solR) of Clostridium acetobutylicum (strain ATCC 824 / DSM 792 / JCM 1419 / IAM 19013 / LMG 5710 / NBRC 13948 / NRRL B-527 / VKM B-1787 / 2291 / W).